The sequence spans 541 residues: Chaperonin GroEL 1 (541 aa).

ATP is bound by residues 29 to 32 (TLGP), 86 to 90 (DGTTT), G413, 477 to 479 (NAA), and D493.

It belongs to the chaperonin (HSP60) family. As to quaternary structure, forms a cylinder of 14 subunits composed of two heptameric rings stacked back-to-back. Interacts with the co-chaperonin GroES.

Its subcellular location is the cytoplasm. The enzyme catalyses ATP + H2O + a folded polypeptide = ADP + phosphate + an unfolded polypeptide.. In terms of biological role, together with its co-chaperonin GroES, plays an essential role in assisting protein folding. The GroEL-GroES system forms a nano-cage that allows encapsulation of the non-native substrate proteins and provides a physical environment optimized to promote and accelerate protein folding. In Paenarthrobacter aurescens (strain TC1), this protein is Chaperonin GroEL 1.